The chain runs to 364 residues: Large ribosomal subunit protein uL22m (364 aa).

It belongs to the universal ribosomal protein uL22 family. In terms of assembly, component of the mitochondrial large ribosomal subunit (mt-LSU). Mature N.crassa 74S mitochondrial ribosomes consist of a small (37S) and a large (54S) subunit. The 37S small subunit contains a 16S ribosomal RNA (16S mt-rRNA) and 32 different proteins. The 54S large subunit contains a 23S rRNA (23S mt-rRNA) and 42 different proteins. uL22m forms the wall of the exit tunnel.

The protein localises to the mitochondrion. Its function is as follows. Component of the mitochondrial ribosome (mitoribosome), a dedicated translation machinery responsible for the synthesis of mitochondrial genome-encoded proteins, including at least some of the essential transmembrane subunits of the mitochondrial respiratory chain. The mitoribosomes are attached to the mitochondrial inner membrane and translation products are cotranslationally integrated into the membrane. This Neurospora crassa (strain ATCC 24698 / 74-OR23-1A / CBS 708.71 / DSM 1257 / FGSC 987) protein is Large ribosomal subunit protein uL22m (mrpl22).